The primary structure comprises 53 residues: UPF0391 membrane protein PC1_0455 (53 aa).

The next 2 membrane-spanning stretches (helical) occupy residues 4–24 (WGII…GGLA) and 30–47 (AAKI…LSLF).

Belongs to the UPF0391 family.

The protein resides in the cell membrane. This is UPF0391 membrane protein PC1_0455 from Pectobacterium carotovorum subsp. carotovorum (strain PC1).